The primary structure comprises 126 residues: Protein ApaG (126 aa).

An ApaG domain is found at 2–126 (SFPIDSIKIK…FRLAMPGVMQ (125 aa)).

The sequence is that of Protein ApaG from Shewanella denitrificans (strain OS217 / ATCC BAA-1090 / DSM 15013).